The chain runs to 251 residues: uncharacterized protein (251 aa).

The segment at 1-22 (MTQLPELGLRSPNNKSPTGPHP) is disordered.

This is an uncharacterized protein from Homo sapiens (Human).